The following is a 157-amino-acid chain: uncharacterized protein (157 aa).

An N-terminal signal peptide occupies residues 1-23 (MEALRRAHEATLRLLLCRPWASG).

The protein resides in the secreted. This is an uncharacterized protein from Mus musculus (Mouse).